Consider the following 1233-residue polypeptide: uncharacterized protein (1233 aa).

Disordered stretches follow at residues 32–51 (SETS…TPKP), 510–529 (ATTN…PVPD), and 882–915 (EVIE…IERS). 2 stretches are compositionally biased toward acidic residues: residues 513–529 (NEEE…PVPD) and 882–905 (EVIE…EDEG). Basic and acidic residues predominate over residues 906 to 915 (DNKQRVIERS).

This is an uncharacterized protein from Dictyostelium discoideum (Social amoeba).